Consider the following 553-residue polypeptide: Phosphomethylpyrimidine synthase (553 aa).

Residues asparagine 192, methionine 221, tyrosine 250, histidine 286, 306 to 308, 347 to 350, and glutamate 386 contribute to the substrate site; these read SRG and DGLR. Zn(2+) is bound at residue histidine 390. Residue tyrosine 413 participates in substrate binding. Histidine 454 contributes to the Zn(2+) binding site. Residues cysteine 534, cysteine 537, and cysteine 542 each coordinate [4Fe-4S] cluster.

The protein belongs to the ThiC family. Homodimer. It depends on [4Fe-4S] cluster as a cofactor.

The enzyme catalyses 5-amino-1-(5-phospho-beta-D-ribosyl)imidazole + S-adenosyl-L-methionine = 4-amino-2-methyl-5-(phosphooxymethyl)pyrimidine + CO + 5'-deoxyadenosine + formate + L-methionine + 3 H(+). Its pathway is cofactor biosynthesis; thiamine diphosphate biosynthesis. Its function is as follows. Catalyzes the synthesis of the hydroxymethylpyrimidine phosphate (HMP-P) moiety of thiamine from aminoimidazole ribotide (AIR) in a radical S-adenosyl-L-methionine (SAM)-dependent reaction. The polypeptide is Phosphomethylpyrimidine synthase (Anaplasma marginale (strain St. Maries)).